The sequence spans 115 residues: Large ribosomal subunit protein bL20c (115 aa).

It belongs to the bacterial ribosomal protein bL20 family.

The protein localises to the plastid. It localises to the chloroplast. In terms of biological role, binds directly to 23S ribosomal RNA and is necessary for the in vitro assembly process of the 50S ribosomal subunit. It is not involved in the protein synthesizing functions of that subunit. In Pleurastrum terricola (Filamentous green alga), this protein is Large ribosomal subunit protein bL20c.